The following is a 492-amino-acid chain: Glycosyltransferase alg8 (492 aa).

4 helical membrane passes run 13-32, 47-69, 379-401, and 421-443; these read GWLL…PPQV, IGVW…LYVV, LTVA…LLWV, and PAYP…HVFF.

This sequence belongs to the glycosyltransferase 2 family.

The protein resides in the cell membrane. It functions in the pathway glycan biosynthesis; alginate biosynthesis. Its function is as follows. Possibly a processive enzyme that polymerizes GDP-mannuronic acid. The sequence is that of Glycosyltransferase alg8 (alg8) from Azotobacter vinelandii.